A 168-amino-acid chain; its full sequence is Protein GRIM REAPER (168 aa).

A signal peptide spans 1 to 30; the sequence is MVIKIPNTFIKATSLLSLILYFLIIATSKS. Asparagine 59 is a glycosylation site (N-linked (GlcNAc...) asparagine).

This sequence belongs to the STIG1 family. As to quaternary structure, interacts with PRK5 and to a lower extent with PRK4. Highly expressed in flowers, and at very low levels in leaves.

The protein resides in the secreted. It is found in the extracellular space. The protein localises to the apoplast. In terms of biological role, involved in the regulation of cell death induced by extracellular reactive oxygen species. Only the processed peptide, and not the full length GRI can bind in vivo to the extracellular domain of the receptor PRK5. The GRIp-induced cell death is superoxide and salicylic acid dependent. In Arabidopsis thaliana (Mouse-ear cress), this protein is Protein GRIM REAPER.